Reading from the N-terminus, the 397-residue chain is Phosphoglycerate kinase (397 aa).

Substrate is bound by residues Asp-21–Asn-23, Arg-37, His-60–Arg-63, Arg-119, and Arg-152. ATP contacts are provided by residues Lys-203, Gly-294, Glu-325, and Gly-354–Ser-357.

Belongs to the phosphoglycerate kinase family. As to quaternary structure, monomer.

The protein resides in the cytoplasm. The enzyme catalyses (2R)-3-phosphoglycerate + ATP = (2R)-3-phospho-glyceroyl phosphate + ADP. It participates in carbohydrate degradation; glycolysis; pyruvate from D-glyceraldehyde 3-phosphate: step 2/5. This chain is Phosphoglycerate kinase, found in Pelodictyon phaeoclathratiforme (strain DSM 5477 / BU-1).